A 714-amino-acid chain; its full sequence is Protein BLISTER (714 aa).

Disordered stretches follow at residues 1–113 (MASA…VDFS), 219–261 (SSYL…KRSR), 288–325 (VTSS…ASDY), and 519–576 (MVQK…SSNT). A compositionally biased stretch (basic and acidic residues) spans 8-33 (RRQEDVEAGRRKLEQFRKRKAAEKAK). 2 stretches are compositionally biased toward polar residues: residues 36 to 50 (SQNT…QSVI) and 58 to 74 (SISN…TSNE). The segment covering 92 to 102 (DGSKERSRQDD) has biased composition (basic and acidic residues). Composition is skewed to polar residues over residues 219 to 253 (SSYL…SAKS), 288 to 297 (VTSSGSQLSG), 313 to 322 (NGPSSLTSGA), and 519 to 561 (MVQK…SSNQ). Residues 356–525 (NDDFTALEQH…LQTMVQKASS (170 aa)) are a coiled coil. Positions 562–576 (ETDSTTLLESDSSNT) are enriched in low complexity.

In terms of assembly, interacts with CLF. As to expression, expressed in root tips, emerging lateral roots, shoot apical meristem (SAM), vasculature of cotyledons, leaves, sepals and carpels.

It localises to the nucleus. It is found in the cytoplasm. Is required for normal leaf, flower and seed development and controls cotyledon and leaf patterning by inhibiting premature differentiation. Regulates the expression of a subset of PcG target genes. Is required for the repression of the floral specific genes PI, SEP2, and SEP3, but also for the activation of FLC. Involved in response to cold. Involved in the regulation of COR15A, COR15B, BAM3 and AMY3 transcripts, and ascorbate levels in response to prolonged chilling temperatures. The sequence is that of Protein BLISTER from Arabidopsis thaliana (Mouse-ear cress).